Here is a 1093-residue protein sequence, read N- to C-terminus: Phosphorylase b kinase regulatory subunit beta (1093 aa).

Residue alanine 2 is modified to N-acetylalanine. The residue at position 4 (alanine 4) is a Phosphoserine. The interval leucine 7–tyrosine 29 is calmodulin-binding. Serine 12 carries the post-translational modification Phosphoserine; by autocatalysis. Residues serine 27 and serine 701 each carry the phosphoserine modification. Residues glutamate 689–isoleucine 716 are disordered. Calmodulin-binding regions lie at residues arginine 768–serine 795 and asparagine 920–arginine 951. Cysteine 1090 is lipidated: S-farnesyl cysteine.

The protein belongs to the phosphorylase b kinase regulatory chain family. Hexadecamer of 4 heterotetramers, each composed of alpha, beta, gamma, and delta subunits. Alpha (PHKA1 or PHKA2) and beta (PHKB) are regulatory subunits, gamma (PHKG1 or PHKG2) is the catalytic subunit, and delta is calmodulin. Ser-701 is probably phosphorylated by PKA. Post-translationally, although the final Cys may be farnesylated, the terminal tripeptide is probably not removed, and the C-terminus is not methylated.

It is found in the cell membrane. It functions in the pathway glycan biosynthesis; glycogen metabolism. By phosphorylation of various serine residues. In terms of biological role, phosphorylase b kinase catalyzes the phosphorylation of serine in certain substrates, including troponin I. The beta chain acts as a regulatory unit and modulates the activity of the holoenzyme in response to phosphorylation. This chain is Phosphorylase b kinase regulatory subunit beta (PHKB), found in Homo sapiens (Human).